The following is a 517-amino-acid chain: Steroid 17-alpha-hydroxylase/17,20 lyase (517 aa).

Cys-451 contacts heme.

This sequence belongs to the cytochrome P450 family. Heme is required as a cofactor.

It localises to the membrane. It catalyses the reaction a C21-steroid + reduced [NADPH--hemoprotein reductase] + O2 = a 17alpha-hydroxy-C21-steroid + oxidized [NADPH--hemoprotein reductase] + H2O + H(+). The enzyme catalyses 17alpha-hydroxyprogesterone + reduced [NADPH--hemoprotein reductase] + O2 = androst-4-ene-3,17-dione + acetate + oxidized [NADPH--hemoprotein reductase] + H2O + 2 H(+). It carries out the reaction 17alpha-hydroxypregnenolone + reduced [NADPH--hemoprotein reductase] + O2 = 3beta-hydroxyandrost-5-en-17-one + acetate + oxidized [NADPH--hemoprotein reductase] + H2O + 2 H(+). Its pathway is lipid metabolism; steroid biosynthesis. Its function is as follows. Conversion of pregnenolone and progesterone to their 17-alpha-hydroxylated products and subsequently to dehydroepiandrosterone (DHEA) and androstenedione. Catalyzes both the 17-alpha-hydroxylation and the 17,20-lyase reaction. The polypeptide is Steroid 17-alpha-hydroxylase/17,20 lyase (cyp17a1) (Oryzias latipes (Japanese rice fish)).